The following is a 416-amino-acid chain: Serine--tRNA ligase (416 aa).

232 to 234 (TAE) is an L-serine binding site. An ATP-binding site is contributed by 263–265 (RKE). Glu286 contacts L-serine. Position 350-353 (350-353 (EISS)) interacts with ATP. An L-serine-binding site is contributed by Ser384.

This sequence belongs to the class-II aminoacyl-tRNA synthetase family. Type-1 seryl-tRNA synthetase subfamily. Homodimer. The tRNA molecule binds across the dimer.

The protein localises to the cytoplasm. It catalyses the reaction tRNA(Ser) + L-serine + ATP = L-seryl-tRNA(Ser) + AMP + diphosphate + H(+). The catalysed reaction is tRNA(Sec) + L-serine + ATP = L-seryl-tRNA(Sec) + AMP + diphosphate + H(+). Its pathway is aminoacyl-tRNA biosynthesis; selenocysteinyl-tRNA(Sec) biosynthesis; L-seryl-tRNA(Sec) from L-serine and tRNA(Sec): step 1/1. Functionally, catalyzes the attachment of serine to tRNA(Ser). Is also able to aminoacylate tRNA(Sec) with serine, to form the misacylated tRNA L-seryl-tRNA(Sec), which will be further converted into selenocysteinyl-tRNA(Sec). The sequence is that of Serine--tRNA ligase from Nautilia profundicola (strain ATCC BAA-1463 / DSM 18972 / AmH).